We begin with the raw amino-acid sequence, 219 residues long: MNISAAQVKDLREKTNAPMMDCKKALTEANGDIEQAIVILRKKGIASAAKKAARVTSEGSVVSYIHAGGKIGVLVEVNCESDFVARTEQFKELTHDIAMHIAASDPKFVRKEDVTPEYMEKEKEIYRDQAAKTGKPAPVIEKIVEGKMAKFYEEVCLLEQPFIKEQTISVGQLIATTIGKLGENISVKRFARFKVGDVGETVAISKASNEGEAEAPAAK.

Positions 81–84 (SDFV) are involved in Mg(2+) ion dislocation from EF-Tu.

The protein belongs to the EF-Ts family.

The protein resides in the cytoplasm. Its function is as follows. Associates with the EF-Tu.GDP complex and induces the exchange of GDP to GTP. It remains bound to the aminoacyl-tRNA.EF-Tu.GTP complex up to the GTP hydrolysis stage on the ribosome. This is Elongation factor Ts from Koribacter versatilis (strain Ellin345).